The chain runs to 147 residues: Hemoglobin subunit beta-3 (147 aa).

A Globin domain is found at 2 to 147; sequence EWTDAERTAI…VTSALSRQYH (146 aa). His-63 and His-92 together coordinate heme b.

The protein belongs to the globin family. Heterotetramer of two alpha chains and two beta chains. As to expression, red blood cells.

Functionally, involved in oxygen transport from gills to the various peripheral tissues. The polypeptide is Hemoglobin subunit beta-3 (hbb3) (Muraena helena (Mediterranean moray)).